A 373-amino-acid polypeptide reads, in one-letter code: Sorting nexin-21 (373 aa).

A disordered region spans residues methionine 1–glycine 107. The span at alanine 21 to glutamate 37 shows a compositional bias: low complexity. The span at serine 55–serine 65 shows a compositional bias: polar residues. Over residues alanine 66–glycine 81 the composition is skewed to acidic residues. In terms of domain architecture, PX spans glutamine 129–arginine 246. Residues arginine 171, serine 173, lysine 198, and arginine 212 each contribute to the a 1,2-diacyl-sn-glycero-3-phospho-(1D-myo-inositol-3-phosphate) site.

This sequence belongs to the sorting nexin family. As to quaternary structure, monomer. As to expression, highly expressed in fetus liver, but only weakly expressed in brain, skeleton muscle, smooth muscle, and cardiac muscle, kidney, and adrenal gland.

Its subcellular location is the cytoplasmic vesicle membrane. The protein localises to the early endosome membrane. Functionally, binds to membranes enriched in phosphatidylinositol 3-phosphate (PtdIns(P3)) and phosphatidylinositol 4,5-bisphosphate. May be involved in several stages of intracellular trafficking. The polypeptide is Sorting nexin-21 (SNX21) (Homo sapiens (Human)).